Reading from the N-terminus, the 339-residue chain is Carboxyvinyl-carboxyphosphonate phosphorylmutase, chloroplastic (339 aa).

The N-terminal 30 residues, 1-30 (MSMLMAVKTTSLCCSSLNLTASPTFRRNPR), are a transit peptide targeting the chloroplast.

It belongs to the isocitrate lyase/PEP mutase superfamily.

It localises to the plastid. Its subcellular location is the chloroplast. It catalyses the reaction 1-carboxyvinyl carboxyphosphonate + H(+) = 3-(hydrohydroxyphosphoryl)pyruvate + CO2. The polypeptide is Carboxyvinyl-carboxyphosphonate phosphorylmutase, chloroplastic (Arabidopsis thaliana (Mouse-ear cress)).